The primary structure comprises 467 residues: Fumarate hydratase class II (467 aa).

Substrate contacts are provided by residues 98 to 100 (SGT), Arg126, 129 to 132 (HPND), 139 to 141 (SSN), and Thr187. His188 serves as the catalytic Proton donor/acceptor. Ser318 is an active-site residue. Substrate is bound by residues Ser319 and 324 to 326 (KVN).

This sequence belongs to the class-II fumarase/aspartase family. Fumarase subfamily. Homotetramer.

The protein resides in the cytoplasm. It catalyses the reaction (S)-malate = fumarate + H2O. It functions in the pathway carbohydrate metabolism; tricarboxylic acid cycle; (S)-malate from fumarate: step 1/1. Its activity is regulated as follows. Inhibited by ATP, citrate and S-2,3-dicarboxyaziridine. In terms of biological role, involved in the TCA cycle. FumC seems to be a backup enzyme for FumA under conditions of iron limitation and oxidative stress. Catalyzes the stereospecific interconversion of fumarate to L-malate. The protein is Fumarate hydratase class II of Escherichia coli (strain K12).